Consider the following 1127-residue polypeptide: Inactive phospholipase C-like protein 2 (1127 aa).

Positions 1–11 (MAECGRGGAAG) are enriched in gly residues. The tract at residues 1-128 (MAECGRGGAA…KKTVSFSSMP (128 aa)) is disordered. A2 carries the post-translational modification N-acetylalanine. S17 is modified (phosphoserine). Positions 19-31 (GPALGAKGALKAG) are enriched in low complexity. Residues 32–42 (VGEGGGGGGRL) are compositionally biased toward gly residues. Position 84 is a phosphothreonine (T84). The PH domain occupies 141–251 (NSMVEGSELK…WVTGLRYLIS (111 aa)). The PI-PLC X-box domain maps to 426–570 (QDMKQPLSHY…LKGKILIKAK (145 aa)). Position 584 is a phosphothreonine (T584). A PI-PLC Y-box domain is found at 618–734 (LSELVSICKS…GYVLRPAIMR (117 aa)). The C2 domain maps to 734 to 863 (REEVSFFSAN…TGYRHVPLQS (130 aa)). Positions 1101–1127 (GTENADVQKPRRSLEVIPEKANDETGE) are disordered. The span at 1106–1127 (DVQKPRRSLEVIPEKANDETGE) shows a compositional bias: basic and acidic residues. S1113 carries the post-translational modification Phosphoserine.

It is found in the cytoplasm. Functionally, may play an role in the regulation of Ins(1,4,5)P3 around the endoplasmic reticulum. The polypeptide is Inactive phospholipase C-like protein 2 (PLCL2) (Homo sapiens (Human)).